The primary structure comprises 451 residues: Phenylalanine-4-hydroxylase (451 aa).

A Phosphoserine; by PKA modification is found at serine 16. The 79-residue stretch at 35–113 folds into the ACT domain; that stretch reads SLIFSLKEEV…TVHELSRDKK (79 aa). Fe cation-binding residues include histidine 284, histidine 289, and glutamate 329.

The protein belongs to the biopterin-dependent aromatic amino acid hydroxylase family. Homodimer and homotetramer. The cofactor is Fe(2+). Post-translationally, phosphorylation at Ser-16 increases basal activity and facilitates activation by the substrate phenylalanine.

The enzyme catalyses (6R)-L-erythro-5,6,7,8-tetrahydrobiopterin + L-phenylalanine + O2 = (4aS,6R)-4a-hydroxy-L-erythro-5,6,7,8-tetrahydrobiopterin + L-tyrosine. It participates in amino-acid degradation; L-phenylalanine degradation; acetoacetate and fumarate from L-phenylalanine: step 1/6. Its activity is regulated as follows. N-terminal region of PAH is thought to contain allosteric binding sites for phenylalanine and to constitute an 'inhibitory' domain that regulates the activity of a catalytic domain in the C-terminal portion of the molecule. In terms of biological role, catalyzes the hydroxylation of L-phenylalanine to L-tyrosine. The chain is Phenylalanine-4-hydroxylase (PAH) from Bos taurus (Bovine).